The sequence spans 178 residues: Large ribosomal subunit protein bL17 (178 aa).

Residues Pro150–Asp178 are disordered. Residues Asp168 to Asp178 show a composition bias toward basic and acidic residues.

Belongs to the bacterial ribosomal protein bL17 family. Part of the 50S ribosomal subunit. Contacts protein L32.

The protein is Large ribosomal subunit protein bL17 of Geobacter metallireducens (strain ATCC 53774 / DSM 7210 / GS-15).